The primary structure comprises 200 residues: Rho-related protein racH (200 aa).

Glycine 11 to threonine 18 provides a ligand contact to GTP. The short motif at tyrosine 33–tyrosine 41 is the Effector region element. GTP contacts are provided by residues aspartate 58–serine 62 and threonine 117–aspartate 120. The segment at glutamate 178–glutamine 200 is disordered. Cysteine methyl ester is present on cysteine 197. Cysteine 197 carries the S-geranylgeranyl cysteine lipid modification. The propeptide at isoleucine 198–glutamine 200 is removed in mature form.

It belongs to the small GTPase superfamily. Rho family.

The protein resides in the cell membrane. In Dictyostelium discoideum (Social amoeba), this protein is Rho-related protein racH (racH).